A 159-amino-acid chain; its full sequence is MKHRILSILLENESGALSRVVGLFSQRGYNIESITVAPTEDLSISKITIQTFGDKKVIEQIGKQLHKLIDVLKVTEIEDEEHFKREIMLIKINNTYDQYRKVQDITNAFRGYIISATSNISIIQLSGTNKNLDTYIEIMKKLTNIIEISRSGIISIYKN.

Residues 5–79 (ILSILLENES…DVLKVTEIED (75 aa)) enclose the ACT domain.

The protein belongs to the acetolactate synthase small subunit family. Dimer of large and small chains.

It catalyses the reaction 2 pyruvate + H(+) = (2S)-2-acetolactate + CO2. The protein operates within amino-acid biosynthesis; L-isoleucine biosynthesis; L-isoleucine from 2-oxobutanoate: step 1/4. Its pathway is amino-acid biosynthesis; L-valine biosynthesis; L-valine from pyruvate: step 1/4. In Buchnera aphidicola subsp. Baizongia pistaciae (strain Bp), this protein is Acetolactate synthase small subunit (ilvH).